The primary structure comprises 451 residues: Phosphoglucosamine mutase (451 aa).

Residue S102 is the Phosphoserine intermediate of the active site. Mg(2+) is bound by residues S102, D242, D244, and D246. S102 is subject to Phosphoserine.

The protein belongs to the phosphohexose mutase family. Mg(2+) is required as a cofactor. Post-translationally, activated by phosphorylation.

It catalyses the reaction alpha-D-glucosamine 1-phosphate = D-glucosamine 6-phosphate. Its function is as follows. Catalyzes the conversion of glucosamine-6-phosphate to glucosamine-1-phosphate. This chain is Phosphoglucosamine mutase, found in Staphylococcus aureus (strain Mu3 / ATCC 700698).